Consider the following 47-residue polypeptide: Delta-actitoxin-Ael1b (47 aa).

Intrachain disulfides connect C4/C44, C6/C34, and C27/C45.

This sequence belongs to the sea anemone sodium channel inhibitory toxin family. Type I subfamily.

The protein localises to the secreted. Its subcellular location is the nematocyst. Produces a positive inotropic effect in mammalian heart muscle. Modifies current passing through the fast sodium channel (Nav) in neuroblastoma cells, leading to delayed and incomplete inactivation. Paralyzes the shore crab (C.maenas) by tetanic contractions after intramuscular injection. In Anthopleura elegantissima (Green aggregating anemone), this protein is Delta-actitoxin-Ael1b.